The chain runs to 348 residues: Putative methylthioribose-1-phosphate isomerase (348 aa).

Substrate-binding positions include 55–57 (RGA), arginine 98, and glutamine 203. Aspartate 244 serves as the catalytic Proton donor. 253–254 (NK) provides a ligand contact to substrate.

The protein belongs to the eIF-2B alpha/beta/delta subunits family. MtnA subfamily.

It catalyses the reaction 5-(methylsulfanyl)-alpha-D-ribose 1-phosphate = 5-(methylsulfanyl)-D-ribulose 1-phosphate. In terms of biological role, catalyzes the interconversion of methylthioribose-1-phosphate (MTR-1-P) into methylthioribulose-1-phosphate (MTRu-1-P). This chain is Putative methylthioribose-1-phosphate isomerase, found in Methanosarcina acetivorans (strain ATCC 35395 / DSM 2834 / JCM 12185 / C2A).